Consider the following 185-residue polypeptide: MAEAAYTPRLRAEYDAKIRTAMTEKFGYENVMQVPRLDKVVLNMGVGDSVNDRKKAETAAAELTQIAGQKAIVTYSRIAIATFKLRENQPIGCKVTLRKARMYEFIDRLVTVALPRVRDFRGLNPKSFDGRGNYSLGIKEHIIFPEIDFDKVTEARGMDITVCTTAKTDEEARALLTAFNFPFRQ.

The protein belongs to the universal ribosomal protein uL5 family. As to quaternary structure, part of the 50S ribosomal subunit; part of the 5S rRNA/L5/L18/L25 subcomplex. Contacts the 5S rRNA and the P site tRNA. Forms a bridge to the 30S subunit in the 70S ribosome.

Its function is as follows. This is one of the proteins that bind and probably mediate the attachment of the 5S RNA into the large ribosomal subunit, where it forms part of the central protuberance. In the 70S ribosome it contacts protein S13 of the 30S subunit (bridge B1b), connecting the 2 subunits; this bridge is implicated in subunit movement. Contacts the P site tRNA; the 5S rRNA and some of its associated proteins might help stabilize positioning of ribosome-bound tRNAs. The sequence is that of Large ribosomal subunit protein uL5 from Bradyrhizobium diazoefficiens (strain JCM 10833 / BCRC 13528 / IAM 13628 / NBRC 14792 / USDA 110).